We begin with the raw amino-acid sequence, 807 residues long: MPKHDSLWLKSLRWIQKHLVHTIVVPQDPFADLNLDAFRPLAYVMKTESLSDIAALSEITAKLGLPSPYEPLVANGVIAPRVVCLQGRKPLFGERAGNEPFLECFMRLLAVHKERPELDIQLVPVSLYWGRTPGKEDDTMKAAVFERENPTWLRKCLMILFLGRHNFVQFSNAVSLRYMADEHGTDMGIAHKLARVARVHFRRQRKVMTGPVLPNRQALFHSLLKSESLRKAIQEEAANKKISETQARETAIEYLDEIAADYSDSLVRIAERFLTWLWNKLYSGINIKGAEQVRQLHHDGHEIVYVPCHRSHMDYLLLSYILYYQGMVPPHIAAGINLNFWPAGPMFRRGGAFFIRRSFNGNKLYTAVFREYLDQLFAKGYSVEYFSEGGRSRTGRLLAPKTGMIAMTMNSVLRGIERPVTLVPVYLGYDHVMEVATYHKELSGKKKKKESVWQVFGAIRKLGNFGQGYVNFGEPITLQNFLNERAPNWRTELADDPEQKPSWLTPAVNVLANRVMTNINDAAAASSVTLTSLVLLATDQNALERSLLERQLDLYLTLLKKVPYTTYTSVAEGDGKHLVQQGLELNKFVVCADPLGEIVSIEASQAVSMTYYRNNIIHLFIVPSLIASCLTHNEQIPRQQVVSIVADFYPLLKAELFMGIKDVPAYVNQVLDFFIEQGLVVETDTLTVVPEHTSQLLLLASSVSETLQRYAIIFNLLANRPKMERSELESESHLLAQRLGALHGITAPEFYDKKLYGTLSVKLKELGYLADNQDKSNINRIRDQANSLLRPSVKQTIVASVTAEHTV.

Positions 308-313 match the HXXXXD motif motif; the sequence is CHRSHM.

Belongs to the GPAT/DAPAT family.

Its subcellular location is the cell inner membrane. The enzyme catalyses sn-glycerol 3-phosphate + an acyl-CoA = a 1-acyl-sn-glycero-3-phosphate + CoA. The protein operates within phospholipid metabolism; CDP-diacylglycerol biosynthesis; CDP-diacylglycerol from sn-glycerol 3-phosphate: step 1/3. This chain is Glycerol-3-phosphate acyltransferase, found in Shewanella baltica (strain OS223).